A 190-amino-acid chain; its full sequence is Protein A52 (190 aa).

It belongs to the orthopoxvirus A52R protein family. In terms of assembly, interacts with host TRAF6 and IRAK2.

Functionally, bcl-2-like protein which targets host toll-like receptor signaling complexes to suppress innate immune response. Interacts with host TRAF6 to activate p38 and subsequently induce the expression of several cytokines such as IL-10. Also associates with host IRAK2 to inhibit NF-kappa-B signaling. The sequence is that of Protein A52 from Homo sapiens (Human).